The chain runs to 487 residues: L-tartrate/succinate antiporter (487 aa).

14 helical membrane-spanning segments follow: residues 10–30, 33–53, 54–74, 93–113, 137–157, 189–209, 236–256, 292–312, 313–333, 340–360, 370–390, 393–413, 418–438, and 465–485; these read YLAP…AGLE, TWLY…EPVP, GAVV…WLLF, WAVS…FMFG, TLFL…VTPS, IGSY…AIFL, FLGM…LAYV, LMVG…AAMV, GYSV…DIVS, VFFW…TGFI, SLSG…FYLL, FFAS…AAAL, IPLP…SILT, and IFGL…MPVV.

It belongs to the SLC13A/DASS transporter (TC 2.A.47) family. DIT1 subfamily.

It is found in the cell inner membrane. It catalyses the reaction (2R,3R)-tartrate(out) + succinate(in) = (2R,3R)-tartrate(in) + succinate(out). Catalyzes the uptake of tartrate in exchange for intracellular succinate. Essential for anaerobic L-tartrate fermentation. The protein is L-tartrate/succinate antiporter (ttdT) of Escherichia coli O157:H7.